The following is a 291-amino-acid chain: Beta-lactamase CTX-M-8 (291 aa).

Residues 1 to 30 (MMRHRVKRMMLMTTACISLLLGSAPLYAQA) form the signal peptide. The active-site Nucleophile; acyl-ester intermediate is the Ser-73. Residues Lys-76, Ser-133, Glu-169, and Ser-240 each contribute to the a beta-lactam site.

This sequence belongs to the class-A beta-lactamase family. Monomer.

The protein localises to the secreted. The catalysed reaction is a beta-lactam + H2O = a substituted beta-amino acid. Its activity is regulated as follows. Inhibited by the beta-lactamase-blocking agents clavulanic acid, tazobactam and sulbactam; in the DH5alpha strain of E.coli. In terms of biological role, extended-spectrum beta-lactamase (ESBL) which confers resistance to penicillins, as well as first, third and fourth-generation cephalosporins. Has cefotaxime-hydrolyzing activity. Inactive against cephalosporin antibiotic, cefoxitin, and the carbapenem, imipenem. The chain is Beta-lactamase CTX-M-8 from Citrobacter amalonaticus.